The chain runs to 374 residues: WAT1-related protein At1g60050 (374 aa).

Transmembrane regions (helical) follow at residues 11 to 31 (IVPF…TILA), 42 to 62 (FVFI…YSFY), 82 to 102 (IFLL…LGLS), 107 to 127 (IVVC…SLAL), 145 to 165 (IGTL…GPFI), 194 to 214 (WALG…WNII), 228 to 248 (VVSA…AFME), 255 to 275 (ELKL…GSII), 292 to 312 (VPLF…SFFV), and 315 to 335 (LHYG…LIMW). The 130-residue stretch at 26 to 155 (ALTILAKTAL…GTLICFTGAF (130 aa)) folds into the EamA domain.

The protein belongs to the drug/metabolite transporter (DMT) superfamily. Plant drug/metabolite exporter (P-DME) (TC 2.A.7.4) family.

Its subcellular location is the membrane. This Arabidopsis thaliana (Mouse-ear cress) protein is WAT1-related protein At1g60050.